We begin with the raw amino-acid sequence, 167 residues long: Endoribonuclease YbeY (167 aa).

Zn(2+) contacts are provided by His131, His135, and His141.

It belongs to the endoribonuclease YbeY family. Zn(2+) serves as cofactor.

It localises to the cytoplasm. Functionally, single strand-specific metallo-endoribonuclease involved in late-stage 70S ribosome quality control and in maturation of the 3' terminus of the 16S rRNA. The chain is Endoribonuclease YbeY from Rickettsia africae (strain ESF-5).